The primary structure comprises 207 residues: MSTIIMDLCSYTRLGLTGYLLSRGVKKREINDIETVDDLAIACDSQRPSVVFINEDCFIHDASNSQRIKLIINQHPNTLFIVFMAIANVHFDEYLLVRKNLLISSKSIKPESLDDILGDILKKETTITSFLNMPTLSLSRTESSMLRMWMAGQGTIQISDQMNIKAKTVSSHKGNIKRKIKTHNKQVIYHVVRLTDNVTNGIFVNMR.

The HTH luxR-type domain maps to 131 to 196 (LNMPTLSLSR…VIYHVVRLTD (66 aa)). The H-T-H motif DNA-binding region spans 155–174 (TIQISDQMNIKAKTVSSHKG).

Belongs to the RcsA family. Interacts with RcsB.

In terms of biological role, component of the Rcs signaling system, which controls transcription of numerous genes. Binds, with RcsB, to the RcsAB box to regulate expression of genes. The polypeptide is Transcriptional regulatory protein RcsA (Escherichia coli O157:H7).